A 229-amino-acid polypeptide reads, in one-letter code: Cytidylate kinase (229 aa).

Position 10–18 (10–18 (GHSSSGKST)) interacts with ATP.

This sequence belongs to the cytidylate kinase family. Type 1 subfamily.

Its subcellular location is the cytoplasm. It carries out the reaction CMP + ATP = CDP + ADP. The catalysed reaction is dCMP + ATP = dCDP + ADP. This Parabacteroides distasonis (strain ATCC 8503 / DSM 20701 / CIP 104284 / JCM 5825 / NCTC 11152) protein is Cytidylate kinase.